Reading from the N-terminus, the 303-residue chain is Glutamyl-Q tRNA(Asp) synthetase (303 aa).

L-glutamate contacts are provided by residues 9–13 (RFAPS) and glutamate 45. Residues 12–22 (PSPSGSLHFGS) carry the 'HIGH' region motif. Residues cysteine 101, cysteine 103, tyrosine 115, and cysteine 119 each coordinate Zn(2+). 2 residues coordinate L-glutamate: tyrosine 172 and arginine 190. The 'KMSKS' region signature appears at 228–232 (KLSKQ). Position 231 (lysine 231) interacts with ATP.

Belongs to the class-I aminoacyl-tRNA synthetase family. GluQ subfamily. Requires Zn(2+) as cofactor.

In terms of biological role, catalyzes the tRNA-independent activation of glutamate in presence of ATP and the subsequent transfer of glutamate onto a tRNA(Asp). Glutamate is transferred on the 2-amino-5-(4,5-dihydroxy-2-cyclopenten-1-yl) moiety of the queuosine in the wobble position of the QUC anticodon. This chain is Glutamyl-Q tRNA(Asp) synthetase, found in Serratia proteamaculans (strain 568).